A 102-amino-acid polypeptide reads, in one-letter code: Ferredoxin-thioredoxin reductase, catalytic chain (102 aa).

[4Fe-4S] cluster is bound at residue C53. C55 (nucleophile) is an active-site residue. Residues C55 and C85 are joined by a disulfide bond. C72, C74, and C83 together coordinate [4Fe-4S] cluster.

Belongs to the ferredoxin thioredoxin reductase beta subunit family. Heterodimer of subunit A (variable subunit) and subunit B (catalytic subunit). Heterodimeric FTR forms a complex with ferredoxin and thioredoxin. It depends on [4Fe-4S] cluster as a cofactor.

It localises to the plastid. The protein resides in the chloroplast. The enzyme catalyses [thioredoxin]-disulfide + 2 reduced [2Fe-2S]-[ferredoxin] + 2 H(+) = [thioredoxin]-dithiol + 2 oxidized [2Fe-2S]-[ferredoxin]. In terms of biological role, catalytic subunit of the ferredoxin-thioredoxin reductase (FTR), which catalyzes the two-electron reduction of thioredoxins by the electrons provided by reduced ferredoxin. In Guillardia theta (Cryptophyte), this protein is Ferredoxin-thioredoxin reductase, catalytic chain (ftrB).